The chain runs to 309 residues: Ferrochelatase (309 aa).

Positions 185 and 262 each coordinate Fe cation.

Belongs to the ferrochelatase family.

Its subcellular location is the cytoplasm. It carries out the reaction heme b + 2 H(+) = protoporphyrin IX + Fe(2+). The protein operates within porphyrin-containing compound metabolism; protoheme biosynthesis; protoheme from protoporphyrin-IX: step 1/1. Functionally, catalyzes the ferrous insertion into protoporphyrin IX. The polypeptide is Ferrochelatase (Campylobacter jejuni subsp. jejuni serotype O:6 (strain 81116 / NCTC 11828)).